Here is a 426-residue protein sequence, read N- to C-terminus: Glutamate-1-semialdehyde 2,1-aminomutase (426 aa).

Position 265 is an N6-(pyridoxal phosphate)lysine (Lys-265).

Belongs to the class-III pyridoxal-phosphate-dependent aminotransferase family. HemL subfamily. As to quaternary structure, homodimer. Requires pyridoxal 5'-phosphate as cofactor.

The protein resides in the cytoplasm. The enzyme catalyses (S)-4-amino-5-oxopentanoate = 5-aminolevulinate. It functions in the pathway porphyrin-containing compound metabolism; protoporphyrin-IX biosynthesis; 5-aminolevulinate from L-glutamyl-tRNA(Glu): step 2/2. The polypeptide is Glutamate-1-semialdehyde 2,1-aminomutase (Salmonella heidelberg (strain SL476)).